Here is a 452-residue protein sequence, read N- to C-terminus: Exodeoxyribonuclease 7 large subunit (452 aa).

The protein belongs to the XseA family. Heterooligomer composed of large and small subunits.

Its subcellular location is the cytoplasm. It carries out the reaction Exonucleolytic cleavage in either 5'- to 3'- or 3'- to 5'-direction to yield nucleoside 5'-phosphates.. In terms of biological role, bidirectionally degrades single-stranded DNA into large acid-insoluble oligonucleotides, which are then degraded further into small acid-soluble oligonucleotides. The chain is Exodeoxyribonuclease 7 large subunit from Bacillus cereus (strain ATCC 10987 / NRS 248).